Here is a 264-residue protein sequence, read N- to C-terminus: S-adenosylmethionine decarboxylase proenzyme (264 aa).

Catalysis depends on Ser112, which acts as the Schiff-base intermediate with substrate; via pyruvic acid. Ser112 carries the pyruvic acid (Ser); by autocatalysis modification. Catalysis depends on His117, which acts as the Proton acceptor; for processing activity. The Proton donor; for catalytic activity role is filled by Cys140.

This sequence belongs to the prokaryotic AdoMetDC family. Type 2 subfamily. In terms of assembly, heterooctamer of four alpha and four beta chains arranged as a tetramer of alpha/beta heterodimers. Pyruvate is required as a cofactor. Is synthesized initially as an inactive proenzyme. Formation of the active enzyme involves a self-maturation process in which the active site pyruvoyl group is generated from an internal serine residue via an autocatalytic post-translational modification. Two non-identical subunits are generated from the proenzyme in this reaction, and the pyruvate is formed at the N-terminus of the alpha chain, which is derived from the carboxyl end of the proenzyme. The post-translation cleavage follows an unusual pathway, termed non-hydrolytic serinolysis, in which the side chain hydroxyl group of the serine supplies its oxygen atom to form the C-terminus of the beta chain, while the remainder of the serine residue undergoes an oxidative deamination to produce ammonia and the pyruvoyl group blocking the N-terminus of the alpha chain.

It carries out the reaction S-adenosyl-L-methionine + H(+) = S-adenosyl 3-(methylsulfanyl)propylamine + CO2. It participates in amine and polyamine biosynthesis; S-adenosylmethioninamine biosynthesis; S-adenosylmethioninamine from S-adenosyl-L-methionine: step 1/1. Its function is as follows. Catalyzes the decarboxylation of S-adenosylmethionine to S-adenosylmethioninamine (dcAdoMet), the propylamine donor required for the synthesis of the polyamines spermine and spermidine from the diamine putrescine. This Sodalis glossinidius (strain morsitans) protein is S-adenosylmethionine decarboxylase proenzyme.